The chain runs to 137 residues: Protein yippee-like F37A8.5 (137 aa).

The interval 1 to 20 (MHFRMKVLENSSKHNTPKKQ) is disordered. Positions 32–129 (RCYSCIHCRA…IELAHMVKDN (98 aa)) constitute a Yippee domain. Positions 36, 39, 92, and 95 each coordinate Zn(2+).

It belongs to the yippee family.

The chain is Protein yippee-like F37A8.5 from Caenorhabditis elegans.